Reading from the N-terminus, the 395-residue chain is NAD(P)H-quinone oxidoreductase subunit H, chloroplastic (395 aa).

This sequence belongs to the complex I 49 kDa subunit family. NDH is composed of at least 16 different subunits, 5 of which are encoded in the nucleus.

The protein resides in the plastid. It localises to the chloroplast thylakoid membrane. The catalysed reaction is a plastoquinone + NADH + (n+1) H(+)(in) = a plastoquinol + NAD(+) + n H(+)(out). The enzyme catalyses a plastoquinone + NADPH + (n+1) H(+)(in) = a plastoquinol + NADP(+) + n H(+)(out). Its function is as follows. NDH shuttles electrons from NAD(P)H:plastoquinone, via FMN and iron-sulfur (Fe-S) centers, to quinones in the photosynthetic chain and possibly in a chloroplast respiratory chain. The immediate electron acceptor for the enzyme in this species is believed to be plastoquinone. Couples the redox reaction to proton translocation, and thus conserves the redox energy in a proton gradient. The protein is NAD(P)H-quinone oxidoreductase subunit H, chloroplastic of Staurastrum punctulatum (Green alga).